A 261-amino-acid polypeptide reads, in one-letter code: MSDILDKIITVKREEIAAALESAPLEELKVQASARDSRDFVGALRDKHAAGHAAVIAEVKKASPSKGVLRKHFVPADIARSYAQHGAACLSVLTDERFFQGSARYLEQARAACALPVLRKDFIVDAYQVLEARAMGADAILLIAAALDTPLMIDLEAYAHSLGLAVLVEVHNRGELDEALKLKTPLVGINNRNLRTFETTIDTTLGMLDAIPDDRIVVTESGILSRADVERMEAAGVHTFLVGEAFMRAENPGAELARMFF.

Belongs to the TrpC family.

It carries out the reaction 1-(2-carboxyphenylamino)-1-deoxy-D-ribulose 5-phosphate + H(+) = (1S,2R)-1-C-(indol-3-yl)glycerol 3-phosphate + CO2 + H2O. The protein operates within amino-acid biosynthesis; L-tryptophan biosynthesis; L-tryptophan from chorismate: step 4/5. This chain is Indole-3-glycerol phosphate synthase, found in Burkholderia pseudomallei (strain 1710b).